The following is a 60-amino-acid chain: Large ribosomal subunit protein bL33 (60 aa).

It belongs to the bacterial ribosomal protein bL33 family.

The protein is Large ribosomal subunit protein bL33 of Chlorobium luteolum (strain DSM 273 / BCRC 81028 / 2530) (Pelodictyon luteolum).